The chain runs to 115 residues: NADH-ubiquinone oxidoreductase chain 3 (115 aa).

A run of 3 helical transmembrane segments spans residues 3–23, 55–75, and 86–106; these read LMIT…IAFW, FFLV…LLPL, and LTLL…AYEW.

This sequence belongs to the complex I subunit 3 family. As to quaternary structure, core subunit of respiratory chain NADH dehydrogenase (Complex I) which is composed of 45 different subunits. Interacts with TMEM186. Interacts with TMEM242.

It is found in the mitochondrion inner membrane. It carries out the reaction a ubiquinone + NADH + 5 H(+)(in) = a ubiquinol + NAD(+) + 4 H(+)(out). Its function is as follows. Core subunit of the mitochondrial membrane respiratory chain NADH dehydrogenase (Complex I) which catalyzes electron transfer from NADH through the respiratory chain, using ubiquinone as an electron acceptor. Essential for the catalytic activity of complex I. This Loxodonta africana (African elephant) protein is NADH-ubiquinone oxidoreductase chain 3.